A 467-amino-acid chain; its full sequence is 3-isopropylmalate dehydratase large subunit (467 aa).

Residues cysteine 348, cysteine 409, and cysteine 412 each contribute to the [4Fe-4S] cluster site.

The protein belongs to the aconitase/IPM isomerase family. LeuC type 1 subfamily. In terms of assembly, heterodimer of LeuC and LeuD. [4Fe-4S] cluster is required as a cofactor.

It carries out the reaction (2R,3S)-3-isopropylmalate = (2S)-2-isopropylmalate. It participates in amino-acid biosynthesis; L-leucine biosynthesis; L-leucine from 3-methyl-2-oxobutanoate: step 2/4. Catalyzes the isomerization between 2-isopropylmalate and 3-isopropylmalate, via the formation of 2-isopropylmaleate. The sequence is that of 3-isopropylmalate dehydratase large subunit from Thiobacillus denitrificans (strain ATCC 25259 / T1).